Reading from the N-terminus, the 174-residue chain is NADH-quinone oxidoreductase subunit B 2 (174 aa).

C38, C39, C104, and C133 together coordinate [4Fe-4S] cluster.

The protein belongs to the complex I 20 kDa subunit family. In terms of assembly, NDH-1 is composed of 14 different subunits. Subunits NuoB, C, D, E, F, and G constitute the peripheral sector of the complex. [4Fe-4S] cluster serves as cofactor.

Its subcellular location is the cell membrane. It catalyses the reaction a quinone + NADH + 5 H(+)(in) = a quinol + NAD(+) + 4 H(+)(out). NDH-1 shuttles electrons from NADH, via FMN and iron-sulfur (Fe-S) centers, to quinones in the respiratory chain. The immediate electron acceptor for the enzyme in this species is believed to be ubiquinone. Couples the redox reaction to proton translocation (for every two electrons transferred, four hydrogen ions are translocated across the cytoplasmic membrane), and thus conserves the redox energy in a proton gradient. The chain is NADH-quinone oxidoreductase subunit B 2 from Chloroflexus aurantiacus (strain ATCC 29366 / DSM 635 / J-10-fl).